Consider the following 441-residue polypeptide: N-acetylmuramyl-L-alanine amidase (441 aa).

Positions 1–25 (MKTKTLFIFSAILTLSIFAPNETFA) are cleaved as a signal peptide.

It belongs to the peptidase S12 family.

It catalyses the reaction Hydrolyzes the link between N-acetylmuramoyl residues and L-amino acid residues in certain cell-wall glycopeptides.. It participates in cell wall biogenesis; peptidoglycan recycling. In terms of biological role, involved in muropeptide recycling. Hydrolyzes the amide bond between N-acetylmuramic acid (MurNAc) and the L-alanine residue of the stem peptide. Cannot hydrolyze muropeptides containing N-acetylglucosamine (GlcNAc) at the non-reducing end. This Bacillus subtilis (strain 168) protein is N-acetylmuramyl-L-alanine amidase.